A 630-amino-acid polypeptide reads, in one-letter code: Membrane protein insertase YidC (630 aa).

5 consecutive transmembrane segments (helical) span residues 10-30 (LMFL…VMGP), 396-416 (MVGN…LILF), 470-490 (VPML…TVTI), 528-548 (LIGA…LYGF), and 571-591 (FFPI…VIYW).

Belongs to the OXA1/ALB3/YidC family. Type 1 subfamily. In terms of assembly, interacts with the Sec translocase complex via SecD. Specifically interacts with transmembrane segments of nascent integral membrane proteins during membrane integration.

It localises to the cell inner membrane. In terms of biological role, required for the insertion and/or proper folding and/or complex formation of integral membrane proteins into the membrane. Involved in integration of membrane proteins that insert both dependently and independently of the Sec translocase complex, as well as at least some lipoproteins. Aids folding of multispanning membrane proteins. The protein is Membrane protein insertase YidC of Caulobacter sp. (strain K31).